A 62-amino-acid chain; its full sequence is Small ribosomal subunit protein eS27 (62 aa).

Positions 17, 20, 36, and 39 each coordinate Zn(2+). A C4-type zinc finger spans residues 17–39 (CPDCENEQLVFEKATSVVECTVC).

Belongs to the eukaryotic ribosomal protein eS27 family. In terms of assembly, part of the 30S ribosomal subunit. Zn(2+) serves as cofactor.

This is Small ribosomal subunit protein eS27 from Methanocorpusculum labreanum (strain ATCC 43576 / DSM 4855 / Z).